The sequence spans 349 residues: Small ribosomal subunit protein uS2 (349 aa).

It belongs to the universal ribosomal protein uS2 family.

This is Small ribosomal subunit protein uS2 from Methylobacterium nodulans (strain LMG 21967 / CNCM I-2342 / ORS 2060).